We begin with the raw amino-acid sequence, 511 residues long: Ent-copalyl diphosphate synthase (511 aa).

Residues D291 and D293 each coordinate a divalent metal cation. The short motif at 291-294 (DSDD) is the DXDD motif element.

The protein belongs to the terpene synthase family. In terms of assembly, homodimer. Requires a divalent metal cation as cofactor.

It catalyses the reaction (2E,6E,10E)-geranylgeranyl diphosphate = ent-copalyl diphosphate. The protein operates within antibiotic biosynthesis. Its function is as follows. Involved in viguiepinol biosynthesis. Catalyzes the conversion of geranylgeranyl diphosphate (GGDP) into copalyl diphosphate (ent-CDP). This chain is Ent-copalyl diphosphate synthase, found in Streptomyces sp. (strain KO-3988).